The sequence spans 143 residues: MSNKTKGSTLERYLVSRLRDKGFAVIRAPASGSNRKDHVPDVIAMKSGVIILIEMKSRKNGNKIYIQKEQAEGIKEFAKKSGGELFLGAKIAKDLKFLRFDELRRTEAGNYVADLETIKSGMDFDELVRYVEGKISKTLDSFM.

Glu11 provides a ligand contact to Mg(2+). Residue Ser31 is part of the active site. 2 residues coordinate Mg(2+): Asp41 and Glu54.

This sequence belongs to the Holliday junction resolvase Hjc family. Homodimer. Mg(2+) is required as a cofactor.

The enzyme catalyses Endonucleolytic cleavage at a junction such as a reciprocal single-stranded crossover between two homologous DNA duplexes (Holliday junction).. In terms of biological role, a structure-specific endonuclease that resolves Holliday junction (HJ) intermediates during genetic recombination. Cleaves 4-way DNA junctions introducing paired nicks in opposing strands, leaving a 5'-terminal phosphate and a 3'-terminal hydroxyl group that are ligated to produce recombinant products. Redundant function with Holliday junction resolvase Hje. The protein is Crossover junction endodeoxyribonuclease Hjc of Sulfolobus acidocaldarius (strain ATCC 33909 / DSM 639 / JCM 8929 / NBRC 15157 / NCIMB 11770).